Here is a 418-residue protein sequence, read N- to C-terminus: UDP-N-acetylglucosamine 1-carboxyvinyltransferase (418 aa).

Phosphoenolpyruvate is bound at residue 23–24; the sequence is KN. Arg92 serves as a coordination point for UDP-N-acetyl-alpha-D-glucosamine. Cys116 functions as the Proton donor in the catalytic mechanism. Position 116 is a 2-(S-cysteinyl)pyruvic acid O-phosphothioketal (Cys116). UDP-N-acetyl-alpha-D-glucosamine is bound by residues 121–125, 161–164, Asp306, and Ile328; these read RPVDL and KVSV.

It belongs to the EPSP synthase family. MurA subfamily.

Its subcellular location is the cytoplasm. It catalyses the reaction phosphoenolpyruvate + UDP-N-acetyl-alpha-D-glucosamine = UDP-N-acetyl-3-O-(1-carboxyvinyl)-alpha-D-glucosamine + phosphate. It functions in the pathway cell wall biogenesis; peptidoglycan biosynthesis. Functionally, cell wall formation. Adds enolpyruvyl to UDP-N-acetylglucosamine. The sequence is that of UDP-N-acetylglucosamine 1-carboxyvinyltransferase from Vibrio parahaemolyticus serotype O3:K6 (strain RIMD 2210633).